Here is a 360-residue protein sequence, read N- to C-terminus: Glutamate--cysteine ligase (360 aa).

This sequence belongs to the glutamate--cysteine ligase type 2 family. YbdK subfamily.

It carries out the reaction L-cysteine + L-glutamate + ATP = gamma-L-glutamyl-L-cysteine + ADP + phosphate + H(+). In terms of biological role, catalyzes the synthesis of gamma-glutamylcysteine (gamma-GC), the main low-molecular-weight thiol compound instead of glutathione in halophilic archaea. This chain is Glutamate--cysteine ligase, found in Halobacterium salinarum (strain ATCC 29341 / DSM 671 / R1).